We begin with the raw amino-acid sequence, 231 residues long: Small ribosomal subunit protein uS3 (231 aa).

The region spanning V39–R107 is the KH type-2 domain.

This sequence belongs to the universal ribosomal protein uS3 family. Part of the 30S ribosomal subunit. Forms a tight complex with proteins S10 and S14.

Functionally, binds the lower part of the 30S subunit head. Binds mRNA in the 70S ribosome, positioning it for translation. This is Small ribosomal subunit protein uS3 from Colwellia psychrerythraea (strain 34H / ATCC BAA-681) (Vibrio psychroerythus).